The chain runs to 282 residues: Nucleotide-binding protein PXO_02223 (282 aa).

5–12 (GLSGSGKS) lines the ATP pocket. 57–60 (DVRS) provides a ligand contact to GTP.

This sequence belongs to the RapZ-like family.

Displays ATPase and GTPase activities. The chain is Nucleotide-binding protein PXO_02223 from Xanthomonas oryzae pv. oryzae (strain PXO99A).